Here is a 178-residue protein sequence, read N- to C-terminus: ATP-dependent protease subunit HslV (178 aa).

The active site involves Thr-7. Na(+) is bound by residues Gly-162, Cys-165, and Thr-168.

It belongs to the peptidase T1B family. HslV subfamily. A double ring-shaped homohexamer of HslV is capped on each side by a ring-shaped HslU homohexamer. The assembly of the HslU/HslV complex is dependent on binding of ATP.

The protein resides in the cytoplasm. The catalysed reaction is ATP-dependent cleavage of peptide bonds with broad specificity.. Its activity is regulated as follows. Allosterically activated by HslU binding. Functionally, protease subunit of a proteasome-like degradation complex believed to be a general protein degrading machinery. This Burkholderia ambifaria (strain ATCC BAA-244 / DSM 16087 / CCUG 44356 / LMG 19182 / AMMD) (Burkholderia cepacia (strain AMMD)) protein is ATP-dependent protease subunit HslV.